A 178-amino-acid chain; its full sequence is Large ribosomal subunit protein uL10 (178 aa).

It belongs to the universal ribosomal protein uL10 family. In terms of assembly, part of the ribosomal stalk of the 50S ribosomal subunit. The N-terminus interacts with L11 and the large rRNA to form the base of the stalk. The C-terminus forms an elongated spine to which L12 dimers bind in a sequential fashion forming a multimeric L10(L12)X complex.

In terms of biological role, forms part of the ribosomal stalk, playing a central role in the interaction of the ribosome with GTP-bound translation factors. This Dictyoglomus turgidum (strain DSM 6724 / Z-1310) protein is Large ribosomal subunit protein uL10.